A 453-amino-acid chain; its full sequence is Na(+)/H(+) antiporter NhaA 2 (453 aa).

A run of 12 helical transmembrane segments spans residues 23 to 43 (FLHIEAVSGIVLLIAAVAALI), 74 to 94 (LHFWINDGLMTIFFLVVGMEI), 111 to 131 (LPMAAAVGGVAVPALLYLSFG), 139 to 159 (GWAVPTATDIAFAVGVLALLG), 168 to 188 (VFLLALAIIDDIIAVLIIAFF), 191 to 211 (GGLDYTGFGVALIGLLMVIGL), 214 to 234 (IGVGSAYAYVLPGAIVWLGIL), 235 to 255 (LTGAHPTLAGVVLGLMTPVTA), 316 to 336 (VAFGIMPVFALANAGVSLSGV), 345 to 365 (WVMIAVAVALVAGKPLGIVSV), 386 to 406 (IVLVGLLAGIGFTMSIFIANL), and 419 to 439 (LGVLSASLIAAVLGLTWGVWS).

The protein belongs to the NhaA Na(+)/H(+) (TC 2.A.33) antiporter family.

It is found in the cell inner membrane. It carries out the reaction Na(+)(in) + 2 H(+)(out) = Na(+)(out) + 2 H(+)(in). Na(+)/H(+) antiporter that extrudes sodium in exchange for external protons. The protein is Na(+)/H(+) antiporter NhaA 2 of Pseudomonas putida (strain ATCC 700007 / DSM 6899 / JCM 31910 / BCRC 17059 / LMG 24140 / F1).